A 233-amino-acid chain; its full sequence is Uracil-DNA glycosylase (233 aa).

D70 acts as the Proton acceptor in catalysis.

The protein belongs to the uracil-DNA glycosylase (UDG) superfamily. UNG family.

Its subcellular location is the cytoplasm. The enzyme catalyses Hydrolyzes single-stranded DNA or mismatched double-stranded DNA and polynucleotides, releasing free uracil.. Excises uracil residues from the DNA which can arise as a result of misincorporation of dUMP residues by DNA polymerase or due to deamination of cytosine. The protein is Uracil-DNA glycosylase of Helicobacter pylori (strain P12).